We begin with the raw amino-acid sequence, 292 residues long: Protein/nucleic acid deglycase HchA (292 aa).

A compositionally biased stretch (polar residues) spans Met-1–Pro-12. The segment at Met-1 to Phe-23 is disordered. The active-site Nucleophile is the Cys-190.

It belongs to the peptidase C56 family. HchA subfamily.

It is found in the cytoplasm. The enzyme catalyses N(omega)-(1-hydroxy-2-oxopropyl)-L-arginyl-[protein] + H2O = lactate + L-arginyl-[protein] + H(+). It carries out the reaction N(6)-(1-hydroxy-2-oxopropyl)-L-lysyl-[protein] + H2O = lactate + L-lysyl-[protein] + H(+). It catalyses the reaction S-(1-hydroxy-2-oxopropyl)-L-cysteinyl-[protein] + H2O = lactate + L-cysteinyl-[protein] + H(+). The catalysed reaction is N(omega)-(1-hydroxy-2-oxoethyl)-L-arginyl-[protein] + H2O = L-arginyl-[protein] + glycolate + H(+). The enzyme catalyses N(6)-(1-hydroxy-2-oxoethyl)-L-lysyl-[protein] + H2O = glycolate + L-lysyl-[protein] + H(+). It carries out the reaction S-(1-hydroxy-2-oxoethyl)-L-cysteinyl-[protein] + H2O = glycolate + L-cysteinyl-[protein] + H(+). It catalyses the reaction N(2)-(1-hydroxy-2-oxopropyl)-dGTP + H2O = lactate + dGTP + H(+). The catalysed reaction is N(2)-(1-hydroxy-2-oxopropyl)-GTP + H2O = lactate + GTP + H(+). The enzyme catalyses N(2)-(1-hydroxy-2-oxopropyl)-GDP + H2O = lactate + GDP + H(+). It carries out the reaction N(2)-(1-hydroxy-2-oxopropyl)-GMP + H2O = lactate + GMP + H(+). It catalyses the reaction N(2)-(1-hydroxy-2-oxoethyl)-dGTP + H2O = dGTP + glycolate + H(+). The catalysed reaction is N(2)-(1-hydroxy-2-oxoethyl)-GTP + H2O = glycolate + GTP + H(+). The enzyme catalyses N(2)-(1-hydroxy-2-oxoethyl)-GDP + H2O = glycolate + GDP + H(+). It carries out the reaction N(2)-(1-hydroxy-2-oxoethyl)-GMP + H2O = glycolate + GMP + H(+). It catalyses the reaction an N(2)-(1-hydroxy-2-oxopropyl)-guanosine in RNA + H2O = a guanosine in RNA + lactate + H(+). The catalysed reaction is an N(2)-(1-hydroxy-2-oxopropyl)-2'-deoxyguanosine in DNA + H2O = a 2'-deoxyguanosine in DNA + lactate + H(+). The enzyme catalyses an N(2)-(1-hydroxy-2-oxoethyl)-guanosine in RNA + H2O = a guanosine in RNA + glycolate + H(+). It carries out the reaction an N(2)-(1-hydroxy-2-oxoethyl)-2'-deoxyguanosine in DNA + H2O = a 2'-deoxyguanosine in DNA + glycolate + H(+). Functionally, protein and nucleotide deglycase that catalyzes the deglycation of the Maillard adducts formed between amino groups of proteins or nucleotides and reactive carbonyl groups of glyoxals. Thus, functions as a protein deglycase that repairs methylglyoxal- and glyoxal-glycated proteins, and releases repaired proteins and lactate or glycolate, respectively. Deglycates cysteine, arginine and lysine residues in proteins, and thus reactivates these proteins by reversing glycation by glyoxals. Acts on early glycation intermediates (hemithioacetals and aminocarbinols), preventing the formation of Schiff bases and advanced glycation endproducts (AGE). Also functions as a nucleotide deglycase able to repair glycated guanine in the free nucleotide pool (GTP, GDP, GMP, dGTP) and in DNA and RNA. Is thus involved in a major nucleotide repair system named guanine glycation repair (GG repair), dedicated to reversing methylglyoxal and glyoxal damage via nucleotide sanitization and direct nucleic acid repair. Plays an important role in protecting cells from carbonyl stress. The sequence is that of Protein/nucleic acid deglycase HchA from Staphylococcus aureus (strain bovine RF122 / ET3-1).